The sequence spans 676 residues: DNA-directed RNA polymerase subunit beta' (676 aa).

Positions 69, 71, 87, and 90 each coordinate Zn(2+). Mg(2+) is bound by residues D485, D487, and D489.

This sequence belongs to the RNA polymerase beta' chain family. RpoC1 subfamily. As to quaternary structure, in plastids the minimal PEP RNA polymerase catalytic core is composed of four subunits: alpha, beta, beta', and beta''. When a (nuclear-encoded) sigma factor is associated with the core the holoenzyme is formed, which can initiate transcription. It depends on Mg(2+) as a cofactor. The cofactor is Zn(2+).

It is found in the plastid. The protein resides in the chloroplast. It catalyses the reaction RNA(n) + a ribonucleoside 5'-triphosphate = RNA(n+1) + diphosphate. DNA-dependent RNA polymerase catalyzes the transcription of DNA into RNA using the four ribonucleoside triphosphates as substrates. This chain is DNA-directed RNA polymerase subunit beta', found in Fagopyrum esculentum subsp. ancestrale (Wild buckwheat).